The sequence spans 113 residues: Non-structural protein 1 (113 aa).

Belongs to the pneumovirus non-structural protein 1 family.

It is found in the host cytoplasm. Its subcellular location is the host mitochondrion. Functionally, may play a minor role in antagonizing the type I IFN-mediated antiviral response. Additionally, NS1 may serve some inhibitory role in viral transcription and RNA replication. This chain is Non-structural protein 1 (1C), found in Mus musculus (Mouse).